The following is a 156-amino-acid chain: Beta-defensin 125 (156 aa).

A signal peptide spans 1–20; the sequence is MNILMLTFIICGLLTRVTKG. 3 disulfide bridges follow: cysteine 27–cysteine 55, cysteine 35–cysteine 49, and cysteine 39–cysteine 56. Positions 68-156 are excised as a propeptide; it reads PAFPVIHLED…PPSQTALTHN (89 aa). The interval 108–156 is disordered; it reads GETMTPETNTPETTMPPSEATTPETTMPPSETATSETMPPPSQTALTHN. Positions 109 to 144 are enriched in low complexity; that stretch reads ETMTPETNTPETTMPPSEATTPETTMPPSETATSET.

This sequence belongs to the beta-defensin family.

It is found in the secreted. Its function is as follows. Has antibacterial activity. The chain is Beta-defensin 125 (DEFB125) from Homo sapiens (Human).